The chain runs to 649 residues: Acetyl-coenzyme A synthetase (649 aa).

Residues 191-194 (RAGR), Thr-311, and Asn-335 contribute to the CoA site. ATP contacts are provided by residues 387–389 (GEP), 411–416 (DTWWQT), Asp-500, and Arg-515. Ser-523 contributes to the CoA binding site. Residue Arg-526 coordinates ATP. Mg(2+)-binding residues include Val-537, Phe-539, and Ile-542. Residue Arg-584 coordinates CoA. Lys-609 carries the post-translational modification N6-acetyllysine.

The protein belongs to the ATP-dependent AMP-binding enzyme family. The cofactor is Mg(2+). Acetylated. Deacetylation by the SIR2-homolog deacetylase activates the enzyme.

The catalysed reaction is acetate + ATP + CoA = acetyl-CoA + AMP + diphosphate. Its function is as follows. Catalyzes the conversion of acetate into acetyl-CoA (AcCoA), an essential intermediate at the junction of anabolic and catabolic pathways. AcsA undergoes a two-step reaction. In the first half reaction, AcsA combines acetate with ATP to form acetyl-adenylate (AcAMP) intermediate. In the second half reaction, it can then transfer the acetyl group from AcAMP to the sulfhydryl group of CoA, forming the product AcCoA. This chain is Acetyl-coenzyme A synthetase, found in Photobacterium profundum (strain SS9).